The sequence spans 946 residues: Alanine--tRNA ligase, cytoplasmic (946 aa).

Residues His591, His595, Cys710, and His714 each contribute to the Zn(2+) site.

The protein belongs to the class-II aminoacyl-tRNA synthetase family. Monomer. The cofactor is Zn(2+).

Its subcellular location is the cytoplasm. It catalyses the reaction tRNA(Ala) + L-alanine + ATP = L-alanyl-tRNA(Ala) + AMP + diphosphate. Catalyzes the attachment of alanine to tRNA(Ala) in a two-step reaction: alanine is first activated by ATP to form Ala-AMP and then transferred to the acceptor end of tRNA(Ala). Also edits incorrectly charged tRNA(Ala) via its editing domain. The polypeptide is Alanine--tRNA ligase, cytoplasmic (alaS) (Dictyostelium discoideum (Social amoeba)).